We begin with the raw amino-acid sequence, 110 residues long: UPF0122 protein BCAH187_A3894 (110 aa).

This sequence belongs to the UPF0122 family.

Its function is as follows. Might take part in the signal recognition particle (SRP) pathway. This is inferred from the conservation of its genetic proximity to ftsY/ffh. May be a regulatory protein. The polypeptide is UPF0122 protein BCAH187_A3894 (Bacillus cereus (strain AH187)).